A 227-amino-acid chain; its full sequence is 2,3-bisphosphoglycerate-dependent phosphoglycerate mutase (227 aa).

Substrate-binding positions include 7–14 (RHGLSEWN), 20–21 (TG), Arg59, 86–89 (ERHY), Lys97, 113–114 (RR), and 182–183 (GN). The active-site Tele-phosphohistidine intermediate is His8. Glu86 acts as the Proton donor/acceptor in catalysis.

The protein belongs to the phosphoglycerate mutase family. BPG-dependent PGAM subfamily. As to quaternary structure, homodimer.

It catalyses the reaction (2R)-2-phosphoglycerate = (2R)-3-phosphoglycerate. Its pathway is carbohydrate degradation; glycolysis; pyruvate from D-glyceraldehyde 3-phosphate: step 3/5. In terms of biological role, catalyzes the interconversion of 2-phosphoglycerate and 3-phosphoglycerate. This is 2,3-bisphosphoglycerate-dependent phosphoglycerate mutase from Actinobacillus succinogenes (strain ATCC 55618 / DSM 22257 / CCUG 43843 / 130Z).